The sequence spans 357 residues: Glucose-6-phosphatase catalytic subunit 1 (357 aa).

The Lumenal segment spans residues 1-28; it reads MEKGMNVLHDFGIQSTHYLQVNYQNSQD. Residues 29–49 form a helical membrane-spanning segment; that stretch reads WFILVSVIADLRNAFYVLFPI. Over 50 to 60 the chain is Cytoplasmic; sequence WFHLREAVGIK. A helical membrane pass occupies residues 61–81; sequence LLWVAVIGDWLNLVFKWILFG. At 82-117 the chain is on the lumenal side; it reads QRPYWWVLDTDYYSNTSAPLIKQFPVTCETGPGSPS. Position 83 (Arg-83) interacts with substrate. N-linked (GlcNAc...) asparagine glycosylation occurs at Asn-96. The chain crosses the membrane as a helical span at residues 118–138; that stretch reads GHAMGTAGVYYVMVTSTLSIF. The active-site Proton donor is His-119. Residues 139-147 lie on the Cytoplasmic side of the membrane; it reads RGKKKPTYR. The chain crosses the membrane as a helical span at residues 148–168; that stretch reads FRCLNVMLWLGFWVVQLNVCL. The Lumenal segment spans residues 169 to 170; that stretch reads SR. Arg-170 serves as a coordination point for substrate. A helical membrane pass occupies residues 171 to 191; it reads IYLAAHFPHQVVAGVLSGIAV. Residue His-176 is the Nucleophile of the active site. The Cytoplasmic segment spans residues 192–209; that stretch reads AETFRHIQSIYNASLKKY. Residues 210 to 230 form a helical membrane-spanning segment; the sequence is FLITCFLFSFAIGFYLLLKWL. At 231 to 254 the chain is on the lumenal side; sequence GVDLLWTLEKAKRRCERPEWVHID. Residues 255–275 form a helical membrane-spanning segment; the sequence is TTPFASLLKNLGTLFGLGLAL. Residues 276 to 291 are Cytoplasmic-facing; sequence NSSMYRESCKGKLSKW. The helical transmembrane segment at 292 to 312 threads the bilayer; the sequence is FPFRLSCIVASLVLLHLFDSL. At 313–320 the chain is on the lumenal side; it reads KPPSQIEL. A helical membrane pass occupies residues 321–341; it reads IFYVLSFCKSAAVPLASVSLI. At 342–357 the chain is on the cytoplasmic side; sequence PYCLAWVLGQPNKKTV. The Prevents secretion from ER motif lies at 354–357; sequence KKTV.

It belongs to the glucose-6-phosphatase family.

It localises to the endoplasmic reticulum membrane. It catalyses the reaction D-glucose 6-phosphate + H2O = D-glucose + phosphate. Its pathway is carbohydrate biosynthesis; gluconeogenesis. Its function is as follows. Hydrolyzes glucose-6-phosphate to glucose in the endoplasmic reticulum. Forms with the glucose-6-phosphate transporter (SLC37A4/G6PT) the complex responsible for glucose production in the terminal step of glycogenolysis and gluconeogenesis. Hence, it is the key enzyme in homeostatic regulation of blood glucose levels. This is Glucose-6-phosphatase catalytic subunit 1 (G6PC1) from Bos taurus (Bovine).